The sequence spans 87 residues: Tan_10cys (87 aa).

An N-terminal signal peptide occupies residues 1 to 21; sequence MNLKVLFLLAMVLVTLCLGED. Residues 22–27 constitute a propeptide that is removed on maturation; the sequence is RVTDRR.

Belongs to the teretoxin C (TC) superfamily. Post-translationally, contains 5 disulfide bonds. In terms of tissue distribution, expressed by the venom duct.

Its subcellular location is the secreted. In Terebra anilis (Auger snail), this protein is Tan_10cys.